Reading from the N-terminus, the 11197-residue chain is MLAGRPPPPVSSLVHDMIAQRARKQPDAEASISWDTTMTYADLDELSDTVASHLVSIGLQVGSTVVTCLDKSGWVPAIYLSILKAGGAFAPVSPGLSADQLTSAMRRLSPSIVISSTPNLSKFVGLAEHVLDISEILKTPKNTNTQLLSSLTVAVQDPACVLFTSKGEGEETLLVLDHVAVCTSIVTNSNVHDFSPATRTLQFAPYDSRASISDVLFTLAAGGCVCTVSEEEQTGRIADACTRMNPSLVCLTPSSAAVLNQDDLPGIDTIILAGEHLDKDSVGKWATVANLINAYAPTAALGYACCTAPLITISSPRNIGWPRGCAAWVMDPQDPTRLAPPGAVGQLLVESPFLGQSYESGDGGSASALVPRPECLSRPMFSLKPAGDERCFLTEHLVQFDIGDGTLQVVGHKNSKGQLLQFDSHHASSSASSVGETPGVTGPISTPMGDSVSETSLDTTAIDVNLETTDTRTTLLGLSPEKLSRLEALLQPLGQVQQCYPCCSVQEGILVSQVKSPGTYNILVVWELVNASTVSLDRLRTAWERVVKRHAPLRSTFVESLRDGSVFDQVVLTSPSVDVVELPWIEDLTEDDDMLKLTSVTWDMGRPHHRLGLSKAADGRLRCQLLISHAVIDGLSVQALGHDLERSLNDLLPNSGSMDLQSRYFQQLQQIPSEGGPRVYTKRRLLPNIKQLRQFCQEQGTTLFSLTQTAWALVLRAYTLSDDVCFAYMATDRHLLGDDADRAVGFFINLMLCRVGLDGSTPIADVLNKLRQDFVEGFPYQHHPLAEIAHEQGVPASQLFNTTITFMSDDETVEPHCDGVQLHRVADQDVAEYDVVLRVFDSYQDNVAVEFSYWSSSLSSAQAENVFGAFLAAITSIPQSTTVDDVQLMDESMKQQIQQWNSQLPMHVDTCTHDLILDAAQDYPDAPAVESHDGSLSYGEFDVMTGKLAAHLKSLDVGHGIPVVFRMEKSLWAIVAMVGIMRAGCHFVPLDPAWPVERTQFIIDNVGASILLTTESTPALPVQHINHTVVLSPELLNKLPTENSLLPHVKPSDPAYILYTSGSTGQPKGVVVEHQTLSSSSTAHGKAMLMDRQTRAFQFSSFTFDVSLGEIMTTLVHGGCVCIPSSDDRLSNISGAISKLRANQLFMTTTTLGTFSPEDCPTVKTVVCGGELLSQAIKDVWAPHVNLLHGYGPTEACIYAVSGHANDPTLPPSVIGHAMDGNRVWVCRPDDPRILSPIGALGELIIEGPIVAREYFNDSDRTNTSFLDRIPESWGTPSPYRLYRTGDLVRWNMDGSLTFFGRHDGQLKVRGQRCEAGDIENHLTTIEPDIAHCAALVPKQGACASMLVAVLSFKTTHPVLSTTTGEVQLLDTQQVSGIIAKLQESLAQQVPGYMVPQVWLPVVSLPSTTACKTDRRRVSRWVDQLDKATLDNVLNLATTHSATPLADRSPVHMMLATAWGEVLGTPVEFIPDDRSFFSLGGDSILAILVVNRCRAQGIELSVSDILRGRTINDMANNIAISEQHSTSDSSTQGHVTAAHSLALGSGYDLESPVLSQSRTAQLQLASSIDQHTLEDAVRQLIHLHPALRTTYVKEDDAWFARESTDVSKVLLFVSHDGTEAKSSALLDATEGPLLAVDYFPGHNRVAVSALHITLDLASWNLVLRDLDCILSGSPVIPHARPAMDTRASPSHTDEPSVVANLDYWELDPEETYLPHESKYELRIDADASQLLFESCSRSMLTVVDVVVAAAAESFSRSFTDRTVPVIHAADTPRTHVGYGDSVYPVQLTNDLVSSGTAVVAATAKNARLASSKEISSYMAESYTPKVLAARLPEILVRCLDNARFQGNLLQQQGDDLDTATLIPSCISITVSPNDDKSLGVVVAHSWDLGQQKKVRKWVRVLQTALLDTIRAVARANFVSPADFPLVKVSDDKAWEQLRSTINEAVGPSGPTVEDVYPCSPVQQGMLISQAKSTSSYTVDVVWKIHAPSGSPAVSIAKLENAWAKVVQRHSALRTIFVDGSAANEAFLATVLRNPSARVIHQTVVGEDAVESLLAFDPELPVASHEPPHVLTIADAQDKILVHLRINHAVVDGISLDVLQRDLHRAYVDEVGSEWSVSDHSFRDYVAYVKAQDSDKSLDFWKNRLNTVSACRFPQLQVPDVAIANEKRIFKTQIDDIAPLLKLCQTNGVSISNLAQLAWALVLRGYTNNHHVCFGYMTSGRDAPVSGIESAAGVFINLVISDLALDDAMTVKEALESSRAGLADSMDHQYCPLSKVQKALDMGGEPFFNTVLSCYREDDVTPSKTGVAVDLVHLDDTSEFAIAAKIAYTRSTMELSLTYRTEVICPEAADVIGDVWLRTLQSLPSLSDTKISDISLMDPLSSKLVKRWNEHVPGPVDACLHDIITDVARIEPDKMALYSSAGTLTYAELDEFSTRLGHHLVSMGVGPEVIVPLLFEKSIWAVVAMLGVLKAGGAFVALDPAHPAERLALIISDTGSPVMVMSANQATTPLVTGDLSNLEVAMFTVTHESILELPALSDKPCPTVTPDNAAYVIFTSGSTGRPKGVVIEHRAVSTGTKEHGSQMNYTSTSRVLQFASYAFDATIGEVFTTLVYNGTVCIATETERIEDLTGFINRANVDWAFLTPAVARMMTPSDVPTLETLICGGEPIGDLTPRIWSEIKFIQAYGPTETCVFASISDRQHREVRPAIIGHMMGSAAWVVSPSNSDLLVPVGSVGEMLIEGPILGRGYRNDPDKTDASFIRDPEWSVHYPRHSNGRRLYKTGDLVRYNLDGSMDFVQRKDTQIKIRGQRVEAGEIESHVTSAHKDVQHVYVTFVKNGRLSSRLVAIISLKGFGSTESSSSGSLQVLKGDDYDRAKELLRTVTEYLSSKLPRHMVPAVWAVVEGSSVPLTTSGKIDRRLMTNWLEKADEDLVRQILALGQEESVSDDSLTSTEVTIRSVWALVLNLDPQKINSEHRFFSLGGDSITAMQVVSHCRSQGIALTVKDIFKHQTIASLAAFVDYDSAGKIGAPATGNEFDLSDPVEESFALSPIQKMFFDIYPDGVNHFNQSFLVQIASGNKVASPTLHAALNQLVSRHSMLRARYTRSQGQWVQRVTDDVNGSLQYQEHKNTSLGQISNLIDLAQQSLDIQHGPLVSAKLIQLPSRQILALVAHHLVVDMVSWRVLLEELEAILTGKPLAPASVQPVPFQAWVRVQSTLAEELSAHNVLPYPVPEPRQDYWGIDLAKSNGWASTREISFELNEAMTKAILGPCNEPLQTDPQDLFLAAAFRSFAQAFPDRPLPAIFTEGHGRDADVDVDLSRTVGWFTCIVPVALAQDVPEDLLETTMRIKDSRRSVPGHGVPYFSYRYMSGDGVTGNEFRQHDQMEILFNYHGQYQQLERDGALLQTIPEGEFAQRDVDNSARRLAVFDISVAVVSGRARVSMLMPQSLAPTLAQQVEVWSDSFQDKLADVVYKTSTMKSEFTLNDTPLIKDMSYPNLAEMKTLCLEHTGKWGPGSIEEIFPCSPMQEGILLSQMRTPDLYDVRFAFEVSSHDSSPQVSRLHEAWEQVVKRQPMLRTVFLPNLRGSGSFDQAILRKTLATVHHIELEELAEPSSHLVKRVLETMEKAPASSFEYGKVPHELSIYTVGDRMFILLRLSHALVDGASLPYIIKDLQQAYMHKLPAAPGLGYRELVSFIQKQPMDEALEYWSGYLDGAGPCRLPLLLDDAVIPSPGKLEARDIPVPVPDAKALRSLCAKYGVTMASIFHAAWALILRAYIGDDEVHFGYLASGRDAPIQGITSLIGPLINMLISRVNFDRSKTVAQLLQDICEDFASSMSNQYASLAQVQHSLGLGSEPLFTTVVSFQRHDPTSAGADGGSDGIKLTGIDSRDPTEYDVSLNVVDSDQELSFTFTYWTSKISSAHATHMIRALLSALTSFAENVDQPIVNVNLVSPETRCELDSWNAIGMQELHTECAHTLFEQQVEKIPDQQAICAWDGNFTYRELNEASNAFAHHLYSLGEATPKPDEFVITCFDKSAWATVSQMAILKAGAAFAAVDPTYPIVRVKTIVNDLRASVLFTETKYKDRFQGIFSKVIVVDQEMLDSIGGPQLDAPSTPVNGNNLSYSIFTSGSTGQPKGILIEHQSLSTVAKHFAKPYQIDQNTRTLQFAAYTFDLSVGETFMTLLNGGCLCITSERRRLEDLTGAINDFQVNWAFLTPTMADILDPAQVPSMKSLALAGEAATSENIRKWHDKVHFVIAYGPAETTICCNATDGVKATSDPANFGPARGAGIWVADMDDPSILLPVGAVGELLVEGPIVGRGYVDPIKTAEVFIDPPTWLTTQYPRVYRSGDIVRYNPDGTCSFVRRRDNQVKVRGQRIELNEVEVHVSQADADLQHTVVLLPKTGACQGRLTTVLSRHQQQEKVEAQRVLCPVTSEEDRSRNSTLRNKLSSTLPGYMIPKIWITVEQLPLTTNGKMDRRKIQDWVHALTEQELAAIVSSTETTVTGTQDTRKLTPMEQQLVKAWSQVLNLPASSLPLDQSFTSLGGDSISAMQIVSKARECGVTVSVDKVLRSESLSELANHARFKALAPNSNGIQSLVVEKTEPFPLLPIQRMFFEMNPSGNNHFNQTFTVRLSKTLSAERIESAITTVVKHHPMLRARFLKDHNSDWTQQIVPDAESSLGFRQQSFASLSDAVPVLDELQTSLDIHNGPLVASCLINLPDAQVLSLAAHHLVVDLVSWRVILSDLEILLSSESKSLPSLAPAAVTMPAWTDALLSRAKDYNVESVLPFTVPSANFGFWDMDNGRENVMADTVVIQSRLDASSTAALLGRANIAFRTDPDDLMLAALVFSFLRVFPERSVPTIYAEGHGRNAWDDSIDLSRTVGWFTTMYPLVASATTRDLVETVRQVKDIRHSIRDKGFPYFASRYLTAQGRDAFKEHTNMEVLFNYLGQYQQLQQSDTVLRELQEPLEIQDAAPSTPRMALIDILAAVEGSEMVLSIGYNGRMGHRDRLQLWLNEYTAALRSLSTELPTMSPSFTPGDFPLLGIDDAGLKSLAATCKAKVGSLDPTMVESIYPCSPLQQGILVSQAQDAKSYIVYAAWKIRPARGTSFNVNQLKDAWRRLVRYHPVLRTVFCENGTSDGGHAQVLLRADTAAAEPTIKEIQCQRSDVAEFLRSSASSLPTDKPPHILSICTTDDDTYVSLQVSHALIDGTSMNLVMDDLVRSYNGNLQGSGPSYNDYISHICSEPIARSLSYWTETLADTQPCLFPVLSTEGTKRVLNKITLDVPSSTTDAMRQLGRAHAISVSNIFQLAWSLVLRAFTGSDSVCFGYLTSGRDVPVDRIEAMVGPLISMLVSSTQFGSSDDEAQSALDLLKSINRSYIDSLPHQHCSLGSIQNALGVSNTGLFNTVMSLQKINEEAETPEEFGFDLLDSHDPSEYNMTLNILDFNNIVELHFTYWTDKLSDSYASTVVDATLRAVEAIVKDPSRKMPVVDLVGDSERQGLVSRINQDHPTLQTTVHALIEAQVKAIPDNCAVTSWEGDLSYTELDHHATRLAVHLRSLGVGPEVTVPLCFKKSIWTVVAILAVMKAGGVFVPLDPAHPADRIKGIVEQLPSRIVALTSPQCVLTVAHLVDNTISVDASSIAQLENVSSAESLSPGATPSNAVYIIFTSGSTGQPKGVVLEHSAAASGTTAHGHDMSYSRDSRVLQFSSYSFDASILEILTTLVYGGCICVLSEEERINDLVGGINRLRVNWAFLTPAVAMMVEPSQVPTLRLLALGGAPLWLAVLQKWTAVGTIRVVNGYGPTECCALSTHNYYSRSYMRPEVIGKAMGCNTWVVDPRDPNILMPIGAVGELLIEGPIVARGYLNDLVKTQDAFLNGVSWLPSGRLYRTGDIVSYATEGNGDKISYIRRKDTQVKVRGQRIELGEISYQIGASHGSIVAHLVVLGSRGKFSGQIVAIFALDGFPTHQQGNDEPLQLLDSPQDLAKVRAIISEVSEFISDKLPSSMQPSAMVPVNRMPINTSGKIEARRVSAWVDGLDDATYARIMRIADEPDDEPDNEPEANVIQKSEAEDIIRAVVAEVVNVPLEQIPLRRSFFAIGGDSISAMAVVSRCRSRGITFTVSDIFKHKTITALAQFVSQSTQQITKKDGDGIDRSDKVNVDFSLSPIQQMFFDMYPDGVNHFNQSFLVQLPSTEALTSTVVHEAIRQLVDRHSMLRARFSDEDGDWVQRVTPSGDAKSLKYQVHNGVNVDQVVKLIDVAQTSLDIRTGPVMAASLLNLTDKRRILVLVAHHLVIDMVSWRVLLEELEVILSGNGHSLQNMPTSLPFQAWVRTQPRRVSKWSPSRVLPYDIPKPRMDYWLKRGEDNTCGDTRELGFTLDADATKALLGSCNEAFQTDPQDLFLAAAFQSFADAFPDRGPPAIFVEGHGRGDGASEGLDLSRTVGWFTSIVPVALPDGVVATNVVDTLMRIKDVRRSVPGQGVPYFSYRYLSAAGVRKFRNHDKMEILFNYFGQYQQLERDDALLRPVVGDEFPQYDADASVERLAIFDVAGAVTSGRASVTITMPGTLAKARVDGVSLWLDRLKHHLTSLVQVTSDMSTAFTLHDLPLIKNMSYDELSDMREVCLEHTGLWGPGAIEEIFPCSPIQQGILLSQAHRPDLYDVRVALEVSSRNGSLSAQSLGDAWRHVVQRQPMLRTVFLPNMRGNGSFDQAVLRDPVPSIRHVDLGDATDDEMALQTVKQSIAETKGDIFSYGKLPHEFTTYTIGNKTFVFIRLSHALVDGFSLPIVLNDLREAFAHRLSTTPGLSYRELVSFINEQPADQAIGHWVDFLKGSTPCRLPPLLDDASVPSSPELLAIEVEVPCSNALRALCAEHGVTMAIVFQLAWALVLRAYTGEDDVMFGYLTSGRDAPIEGVSTLVGPLINMLTCRAIFNDRSKTVLQLLSQLQDDFINGISNQHVSLAEIQHHLGIGSEGLFTSIISFQRHDAAAGAANDDDGLLKMTPIDGRDPTEYDLSVNVLDEADKDIQIHFTHWTSKASPSHAKHMMQALSAALVAISTKPNQPLVKVDLVGAETRREMDSWNATGIQFVSDECIHNIIERNSQAMPDRQAICGWDRTFTYGELDQAANAFAHHIHSLVDLKPDTFVATCFGKSAWTIVAQLAILKSGGAFVAIDPTHPADRVETILSELGSPPILLTESKHQDRFKTLFPNIVTVNEDTLSSLSVPNGPPSTRVRHSNTAYAIFTSGSTGRPKGIVIEHGSLSTAALTHAGPYQITSDTRALQFAAYTFDVSIGETFYPLSQGGCVCVPSDAARLEDLAGAINGLSADWAFLTPTVADLLDPSLVPGLKTLVLGGEAPTSVNIRRWHDKVFLISGYGPAETTIWCNATGRLNGSSDPANLGPPMGARVWVTDADDPSVLLPVGAVGELLIEGPLVSRGYTDPEKTAAAFISPPGWMTTAYPGKLIYRSGDIGRSRPDGTFSFVRRRDNQVKVRGQRVELNEVEVHISQAETSIRHAVVLYPKSGACQGRLTAVLSHHSLGGEELEQKQTVPGSGGIIAVQSDEAISASDLIQDRLLSTLPPYMIPKIWITVEHLPSTTNGKMDRRQILTWVESLTDDNLASIVQRKSNMTGSVESPTKPKTKMEEHFLQIWSNALNLPIDAIPHNQPFTSLGGDSITAMQVLARARERGITTTVHDILRSRSIADLAGRSRFKNIQLNGSEDSKALTVITDQPFALLPIQRLFFRTQTSVNHHFNQSFIVCLSRPFTADQVRMAIRAIVEHHPMLRARFLADGNEWKQKISPDIAGSFKFQQHHCSSLPDSVETLDDLQASLNISQGPLLVSCLLELSDGQALFLAAHHLVVDLVSWRVILADLEKLLAATSGTTSLPSLEQEGISMPAWTEALIQKSTEYDINSVLPFTVPAADFSFWDMDPTKETNIMADTASLQVRVDGVSTAALLGPANAAFGTDPDDLMIAALIFSFRSIFHERSSIPAVYTESHGRNAWDDGIDLSRTVGWLTTIYPVAVSDIDNAERDLLRVVRQVKDIRRSIPGKGLPYFAYRYLTEEGRAAFEHHDEMEILFNYLGQYQQLQKTDTIIQQIGETTLSTQDASDSTNRLALMDVVAAVEGSELVLSLGYNTKMQHKHRFQAWLDSFKYMLETLASQLPVIPATFTPSDLPLLSLGEDGLSTLAAACHAKVGSWGPDVVEASYPCSPLQQGILLSQAKDESAYVVSGIWKVSPAKGGSPVNLDQLQNAWRRLVQYHQILRTVFCESGRNDGIYAQVVLRENTTESQPTIEVRKCDGPDPLAFLHSSTPALPSDKPPHALLICDAGTDVYLSFNISHALMDGTSLGLMMDDLLRGYHGTLEGVGPSYEPYIAHVYNKPASESLSYWSDTLANARPCHFPVLVDAEGDDTVRSLNKIMRPVPGVEAMRQLGRTHGVSIANFFQVAWALVLRAFTGSDDICFGYLTSGRDVPVDRIEEIVGPLISMLVSSADFSMSDGAPSAIELLQTMNSAYVDSLPHQHCSLADIQRVLRIGNKGLFNTALSLQRVTTGDETQDQIEINVVEGDDPSEYNITVNVVDYGETIDLHFTYWSDKISDSHASDVVEALIRALDAIVQDPNRTLPAVDMLGDSGRKRIMEWNGDGQAPAALNSTVHALIEAHVKESPNRCAVTSSWEGELSYAELDNHATRLSVYLRSLGVGPEVTVPLIFTKSIWMVVSMLAVMKAGGVFVPLDPAHPPERIAMIVEQLPNRAVALASPDRTGLISGLVDNVVALDADEAACIAKDADGDNKLPSDEATPDNAVYIIFTSGSTGQPKGVVLDHRATATEIVTTLVYGGCVCVLSEDERINDLAAAINRLQATWMLLTPAVASTLDPSEVPCIRYIALGGESSSHATNKKWSKGCKVLHAYGPTECCVMCAYDDRTGLLTRPEVIGGSVGCNNWVVDPRDPSVLMPIGAVGELLVQGPIMARGYLNNPDKTQESFLDTGLPSVSGLSRAYKTGDLVSYCSEGKGNKLTFVRRKDTQVKVRGQRIELGEISHQISASNDKVATQMVTLGSRGTLNGKIVAVLTLRGLQTTEDGGDTEPLQILDNPKDIQIARDIVAEVQNYIADKLPGYMHPSVMIVVNRMPINSSGKLETRRVAQWVDEVTDEMYERIIKNLADNEPEAGSESAQTAVVQIISEAVAEVINLPGKVSLRRSFISMGGDSITAMQVMALCRRRGVSLPVQDILKSNNIIAMAAKAQQIGGSSVDSAKDEDEFAPFPLSPIQKLHLTQFRDGENHYNQSMLLKLRRPISETVLHEALLQLVRRHPMLRARFDNDSTRGQWTQRVTNDIQGSLSYAVTEFNTLEEAMGTMIEAERGLDITAGPLVAARVVRVHDSMSIFLVAHHLVIDLVSWRIVLQDLEQLIAGTSLPGTQMSWSYQRWAHSLMKYAETNASTALALPFTPTEPDLDFWGVKKTSNDFNNLVQGDFTLDPSLTSALLDSADKNLKAEVLDVLLAMAAHTFSSVFSDRAAPTFHTETHGRDHPQDTTASVHETIGWFTAIAPLVLDTPSDEYIDSVIRVKDMRRAIPGLGIPYFTAKTLQGSQTLPVEILFNYLGRFQQLERDDGLFESLPKSMGPVDVNLSAARLSVIDISAVVEKDALTVSWNYSAQIQHQDKLSKWFALYEQALHEVVSALQKTSLQLTKSDVPLLPISHQQLKPLNKALAAVSRNGVEAVEDVYPTSPMQRGILLSQSKDASQYDVHAVWEITPANRHDSVDVSRLQRAWYRVIQRHSMLRTVFIDSVVDNSPFDQVVLNKFRPSIKLLTYDDDEEDHDSMMEELWESANGSFAQNAPPHRLALCSDTQGKVYAHFQVSHALIDAGSLRTIIKDWSLAYASPNLTMTPDQSEIRHLHTDVDSGTRLKALAKELNISMASIFQLAWALVLRSYTNLQDICFGYVSSGRDVELDGIVDAVGPFINILVSRIVFGKGDTAAAMLKQLFSTYLDSLPHQHASLADITHALKMPGGKLFNTAFSFQKISQSNGGGKAQDLPLSFSTIGGADPTEFDVTITVIENDSSIEFSIQYSTSFLSEPQANNLSQSLIQALDAIEATPSEAIETLDLVPAKHMEQLKTWGDRLPPTVDRHVHDLFDDMVRSTPTAPAIHAWDGEFTYAELDRESSRLAGLLLKQGVKPDTFVALCFEKSAWVAVAYLAILKAGAAFMLLDPEAPIERIQYMMEQTKTSMVLCSPTYKDMVDDWDATAIVISKEVMGTLPDFAGPFPNISTSSAAYIIFTSGTTGKPKGAVIEHGAYSSSAIAQKKALYIGPGSRFLQFASFMFDATMIEMVTPLLSGGCVCIPRRQDIISDLPRVVREMNINMAILTSSFIRTMSPEEVPTIKRLIQGGEPLSQKDIDIWADKVILGNAYGPSECSVMASCLSDVLRTSEPSNIGYPAACAHWVTEPANMHRLVPIGAIGELLLQGPTLSRGYINNPDKTAEAFVTGLNWATQVGRDPDTRFYATGDLVRLNSDGSVTFVGRKDTQIKIHGQRMELGEIQHHLTTIDEIRHSVVLSPSEGPLQKRLVAVLELANLSSTAASSEEIKLIEPSLRSKATESIQRIRDIITQRLPSYMIPSTWIVVQSMPTMISGKLNLPAVQFWVQNINDETYQELHAAEAVSELDSSDYVAMQVSRKLSSLLVDAPGSTGKLEDFVGKDIVPMQCGLDSITAITFSTWLRKTFGVTISLATLLSLDTSIQTLAVTIKADMAKVGSSGPSNVESVTESTSTTKAAIDLHSEFQHYDQALSQLPVSEIPNTGVAKIPSNFLVTGSTGFLGSQIVRQLILRPNINKVFCLVRAEDDIQAQERMMEVARKGQWWQPELSERIEAWSGDLAKPHLGLDDTRWASVVGGSIDAIIHNGAMVHWHLGYRDLKDANVGSTFDLLSALSKAPSPPRFAYVTGGYFPDEERTDNEVLDLLQGGDGYSQTKFLSEALVRSHGQRLCRHSATFPMPVVIQPGLVIGDADHGVSNLDDFLWRVVASALRIGAYNVDEFNDPNAWLLVAGSDQIATSTIDACMTTVSASATTTIPPSIRFVDGVPVKELWNLLIDEFDFSLRPMSGPEWLQALENDMDSQGPSHPLFPVFEFLQLKQGAVGTLKPTNGDSICPQVETLYRLRQSVDYLNNIGFFASSDSVSPFASKAAFRRTGLRPAKTAHF.

Positions 19–413 are adenylation (A) domain 1; that stretch reads AQRARKQPDA…DGTLQVVGHK (395 aa). Positions 426–452 are disordered; it reads HASSSASSVGETPGVTGPISTPMGDSV. The segment at 690–897 is condensation (C) domain 1; the sequence is KQLRQFCQEQ…LMDESMKQQI (208 aa). The tract at residues 918–1310 is adenylation (A) domain 2; that stretch reads DAAQDYPDAP…GRHDGQLKVR (393 aa). In terms of domain architecture, Carrier 1 spans 1446 to 1522; it reads ADRSPVHMML…DMANNIAISE (77 aa). Ser1483 carries the post-translational modification O-(pantetheine 4'-phosphoryl)serine. Residues 1952 to 2380 form a condensation (C) domain 2 region; sequence VEDVYPCSPV…SDISLMDPLS (429 aa). The segment at 2406–2805 is adenylation (A) domain 3; the sequence is VARIEPDKMA…QRKDTQIKIR (400 aa). The Carrier 2 domain occupies 2945 to 3021; that stretch reads DSLTSTEVTI…SLAAFVDYDS (77 aa). Ser2982 is modified (O-(pantetheine 4'-phosphoryl)serine). An epimerase (E) domain 1 region spans residues 3041–3481; that stretch reads EESFALSPIQ…TSTMKSEFTL (441 aa). A condensation (C) domain 3 region spans residues 3515–3957; the sequence is EEIFPCSPMQ…VSPETRCELD (443 aa). Positions 3976-4371 are adenylation (A) domain 4; the sequence is FEQQVEKIPD…RRRDNQVKVR (396 aa). Residues 4508-4584 form the Carrier 3 domain; it reads RKLTPMEQQL…ELANHARFKA (77 aa). Position 4545 is an O-(pantetheine 4'-phosphoryl)serine (Ser4545). Positions 4603–5022 are epimerase (E) domain 2; sequence FPLLPIQRMF…LNEYTAALRS (420 aa). Residues 5069 to 5501 are condensation (C) domain 4; the sequence is ESIYPCSPLQ…LVGDSERQGL (433 aa). The segment at 5521–5918 is adenylation (A) domain 5; sequence EAQVKAIPDN…RRKDTQVKVR (398 aa). The Carrier 4 domain occupies 6068-6141; sequence SEAEDIIRAV…ALAQFVSQST (74 aa). The residue at position 6102 (Ser6102) is an O-(pantetheine 4'-phosphoryl)serine. The epimerase (E) domain 3 stretch occupies residues 6162 to 6512; the sequence is FSLSPIQQMF…MEILFNYFGQ (351 aa). The condensation (C) domain 5 stretch occupies residues 6636–7076; sequence EEIFPCSPIQ…LVGAETRREM (441 aa). The interval 7097-7491 is adenylation (A) domain 6; it reads ERNSQAMPDR…RRRDNQVKVR (395 aa). Residues 7636 to 7712 enclose the Carrier 5 domain; the sequence is KPKTKMEEHF…DLAGRSRFKN (77 aa). Position 7673 is an O-(pantetheine 4'-phosphoryl)serine (Ser7673). The interval 7733–8162 is epimerase (E) domain 4; the sequence is ALLPIQRLFF…KYMLETLASQ (430 aa). Residues 8205 to 8638 are condensation (C) domain 6; it reads EASYPCSPLQ…MLGDSGRKRI (434 aa). The tract at residues 8660–8832 is adenylation (A) domain 7; that stretch reads EAHVKESPNR…DHRATATEIV (173 aa). Residues 9173–9248 enclose the Carrier 6 domain; it reads SAQTAVVQII…AMAAKAQQIG (76 aa). Ser9209 is subject to O-(pantetheine 4'-phosphoryl)serine. The segment at 9565 to 9683 is epimerase (E) domain 5; sequence RVKDMRRAIP…LHEVVSALQK (119 aa). The condensation (C) domain 7 stretch occupies residues 9721–10116; it reads VEDVYPTSPM…LVPAKHMEQL (396 aa). The interval 10136–10529 is adenylation (A) domain 8; that stretch reads DDMVRSTPTA…VGRKDTQIKI (394 aa). Residues 10663–10749 form the Carrier 7 domain; that stretch reads LDSSDYVAMQ…TLAVTIKADM (87 aa). Ser10708 is subject to O-(pantetheine 4'-phosphoryl)serine. The thioesterase (TE) domain stretch occupies residues 10806-11104; that stretch reads NFLVTGSTGF…SLRPMSGPEW (299 aa).

The protein belongs to the NRP synthetase family.

It participates in secondary metabolite biosynthesis. Its function is as follows. Nonribosomal peptide synthetase; part of the Fg3_54/C64 gene cluster that mediates the biosynthesis of the octapeptide fusaoctaxin A, a virulence factor that is required for cell-to-cell invasiveness of plant host. The 2 nonribosomal peptide synthetases NRPS9 and NRPS5 form an assembly line which likely utilizes GABA as a starter unit (loaded on the unique module M1 of NRPS9) and sequentially incorporates seven extender units composed of the residues L-Ala, L-allo-Ile, L-Ser, L-Val, L-Ser, L-Leu and L-Leu, respectively. During the process, each of the residues that are tethered on modules M3-M7 of NRPS5 containing an E domain can undergo an epimerization reaction to produce a D-configuration before the transpeptidation reaction occurs. The elongation of the peptidyl chain might be terminated by module M8-mediated L-Leu incorporation, followed by R domain-catalyzed 4 electron reduction to release the resulting octapeptide from the assembly line as an alcohol. Fusaoctaxin A is cleaved by the cluster specific ABC transporter FGM5 to the pentapeptide fusapentaxin A and the tripeptide fusatrixin A. The other enzymes from the cluster, FGM1, FGM2, FGM3 and FGM9 seem not to be involved in the biosynthesis of fusaoctaxin A and their functions have still to be determined. The chain is Nonribosomal peptide synthetase 5 from Gibberella zeae (strain ATCC MYA-4620 / CBS 123657 / FGSC 9075 / NRRL 31084 / PH-1) (Wheat head blight fungus).